The chain runs to 600 residues: Elongation factor 4 (600 aa).

In terms of domain architecture, tr-type G spans 4–186 (KNVRNFCIIA…AIVNRIPPPK (183 aa)). Residues 16-21 (DHGKST) and 133-136 (NKID) each bind GTP.

It belongs to the TRAFAC class translation factor GTPase superfamily. Classic translation factor GTPase family. LepA subfamily.

Its subcellular location is the cell inner membrane. The enzyme catalyses GTP + H2O = GDP + phosphate + H(+). Its function is as follows. Required for accurate and efficient protein synthesis under certain stress conditions. May act as a fidelity factor of the translation reaction, by catalyzing a one-codon backward translocation of tRNAs on improperly translocated ribosomes. Back-translocation proceeds from a post-translocation (POST) complex to a pre-translocation (PRE) complex, thus giving elongation factor G a second chance to translocate the tRNAs correctly. Binds to ribosomes in a GTP-dependent manner. The chain is Elongation factor 4 from Aquifex aeolicus (strain VF5).